The sequence spans 432 residues: Adenylosuccinate synthetase (432 aa).

Residues 13–19 and 41–43 each bind GTP; these read GDEGKGK and GHT. The active-site Proton acceptor is D14. Residues D14 and G41 each coordinate Mg(2+). IMP is bound by residues 14-17, 39-42, T130, R144, Q225, T240, and R304; these read DEGK and NAGH. Residue H42 is the Proton donor of the active site. 300-306 is a binding site for substrate; the sequence is AVTGRPR. GTP is bound by residues R306, 332–334, and 415–417; these read KLD and STG.

It belongs to the adenylosuccinate synthetase family. In terms of assembly, homodimer. Requires Mg(2+) as cofactor.

It localises to the cytoplasm. The catalysed reaction is IMP + L-aspartate + GTP = N(6)-(1,2-dicarboxyethyl)-AMP + GDP + phosphate + 2 H(+). It functions in the pathway purine metabolism; AMP biosynthesis via de novo pathway; AMP from IMP: step 1/2. Its function is as follows. Plays an important role in the de novo pathway of purine nucleotide biosynthesis. Catalyzes the first committed step in the biosynthesis of AMP from IMP. This is Adenylosuccinate synthetase from Actinobacillus pleuropneumoniae serotype 5b (strain L20).